Here is a 346-residue protein sequence, read N- to C-terminus: Nuclear distribution protein nudE-like 1 (346 aa).

Residues 13 to 190 (KEEIVYWREL…LAVRERQTNG (178 aa)) adopt a coiled-coil conformation. 2 disordered regions span residues 184-205 (RERQ…DCDK) and 325-346 (YDPP…PLSV). Over residues 188–200 (TNGTRKSAPSSPT) the composition is skewed to polar residues. A compositionally biased stretch (pro residues) spans 335-346 (PPSPPGMLPLSV).

Belongs to the nudE family. Post-translationally, phosphorylated in mitosis.

Its subcellular location is the cytoplasm. It is found in the cytoskeleton. The protein localises to the microtubule organizing center. It localises to the centrosome. The protein resides in the spindle. Functionally, required for organization of the cellular microtubule array and microtubule anchoring at the centrosome. Positively regulates the activity of the minus-end directed microtubule motor protein dynein. May enhance dynein-mediated microtubule sliding by targeting dynein to the microtubule plus end. Positively regulates lysosome peripheral distribution and ruffled border formation in osteoclasts. The polypeptide is Nuclear distribution protein nudE-like 1 (ndel1) (Xenopus tropicalis (Western clawed frog)).